A 391-amino-acid polypeptide reads, in one-letter code: S-adenosylmethionine synthase (391 aa).

Residue H14 participates in ATP binding. A Mg(2+)-binding site is contributed by D16. A K(+)-binding site is contributed by E42. Residues E55 and Q98 each contribute to the L-methionine site. Positions 98 to 108 are flexible loop; it reads QSVDIAIGVDE. Residues 172 to 174, 238 to 239, D247, 253 to 254, A270, and K274 each bind ATP; these read DGK, RF, and RK. D247 is an L-methionine binding site. Residue K278 participates in L-methionine binding.

Belongs to the AdoMet synthase family. In terms of assembly, homotetramer; dimer of dimers. Requires Mg(2+) as cofactor. The cofactor is K(+).

The protein resides in the cytoplasm. The catalysed reaction is L-methionine + ATP + H2O = S-adenosyl-L-methionine + phosphate + diphosphate. It participates in amino-acid biosynthesis; S-adenosyl-L-methionine biosynthesis; S-adenosyl-L-methionine from L-methionine: step 1/1. Functionally, catalyzes the formation of S-adenosylmethionine (AdoMet) from methionine and ATP. The overall synthetic reaction is composed of two sequential steps, AdoMet formation and the subsequent tripolyphosphate hydrolysis which occurs prior to release of AdoMet from the enzyme. The protein is S-adenosylmethionine synthase of Clostridium botulinum (strain Okra / Type B1).